The chain runs to 615 residues: DNA mismatch repair protein MutL (615 aa).

It belongs to the DNA mismatch repair MutL/HexB family.

Functionally, this protein is involved in the repair of mismatches in DNA. It is required for dam-dependent methyl-directed DNA mismatch repair. May act as a 'molecular matchmaker', a protein that promotes the formation of a stable complex between two or more DNA-binding proteins in an ATP-dependent manner without itself being part of a final effector complex. The chain is DNA mismatch repair protein MutL from Parabacteroides distasonis (strain ATCC 8503 / DSM 20701 / CIP 104284 / JCM 5825 / NCTC 11152).